The chain runs to 97 residues: Mapk-regulated corepressor-interacting protein 1 (97 aa).

Disordered regions lie at residues 1–29 (MTSS…NEIF) and 72–97 (SNSL…PKKS). A compositionally biased stretch (polar residues) spans 17-28 (ASNTRSPSSNEI). Basic and acidic residues predominate over residues 82-97 (DLNDLKRRTVQDPKKS).

This sequence belongs to the MCRIP family.

Its subcellular location is the nucleus. It localises to the cytoplasm. The protein localises to the stress granule. In terms of biological role, may play a role in the regulation of the epithelial-mesenchymal transition. The sequence is that of Mapk-regulated corepressor-interacting protein 1 (Mcrip1) from Xenopus tropicalis (Western clawed frog).